Reading from the N-terminus, the 1539-residue chain is Lysine-specific demethylase 5D (1539 aa).

Residues Cys14–Pro55 enclose the JmjN domain. The ARID domain occupies Thr79–Ser169. The disordered stretch occupies residues Pro192–Glu228. Residues Leu197 to Ser210 are compositionally biased toward polar residues. Residues Lys205, Lys229, Lys244, and Lys272 each participate in a glycyl lysine isopeptide (Lys-Gly) (interchain with G-Cter in SUMO2) cross-link. A phosphoserine mark is found at Ser291 and Ser307. A PHD-type 1 zinc finger spans residues Ile316–Ile362. 2-oxoglutarate is bound at residue Tyr430. Residues Glu458–Arg624 enclose the JmjC domain. The Fe cation site is built by His504 and Glu506. The 2-oxoglutarate site is built by Ser512, Asn514, and Lys522. Residue His592 coordinates Fe cation. A C5HC2 zinc finger spans residues Cys697–Met749. Residue Ser884 is modified to Phosphoserine. The segment at Ile1174–Met1235 adopts a PHD-type 2 zinc-finger fold. Ser1346 carries the post-translational modification Phosphoserine. Residues His1429–Ala1521 are disordered. Positions Ser1432–Gln1446 are enriched in basic residues. Over residues Gly1477–Asn1491 the composition is skewed to basic and acidic residues. A compositionally biased stretch (polar residues) spans Leu1494–Ala1521.

Belongs to the JARID1 histone demethylase family. Interacts with PCGF6, MSH5, ZMYND8, AR. L-ascorbate serves as cofactor. Fe(2+) is required as a cofactor. Expression is highly down-regulated in metastatic prostate tumors.

The protein resides in the nucleus. The enzyme catalyses N(6),N(6),N(6)-trimethyl-L-lysyl(4)-[histone H3] + 3 2-oxoglutarate + 3 O2 = L-lysyl(4)-[histone H3] + 3 formaldehyde + 3 succinate + 3 CO2. Its function is as follows. Histone demethylase that specifically demethylates 'Lys-4' of histone H3, thereby playing a central role in histone code. Does not demethylate histone H3 'Lys-9', H3 'Lys-27', H3 'Lys-36', H3 'Lys-79' or H4 'Lys-20'. Demethylates trimethylated and dimethylated but not monomethylated H3 'Lys-4'. May play a role in spermatogenesis. Involved in transcriptional repression of diverse metastasis-associated genes; in this function seems to cooperate with ZMYND8. Suppresses prostate cancer cell invasion. Regulates androgen receptor (AR) transcriptional activity by demethylating H3K4me3 active transcription marks. The polypeptide is Lysine-specific demethylase 5D (KDM5D) (Homo sapiens (Human)).